The following is a 185-amino-acid chain: Urease accessory protein UreE (185 aa).

The segment at 153–185 (LRANSAQGHGHSHSHSHDHHGYHHHGDGNWHKH) is disordered. Basic residues predominate over residues 162-175 (GHSHSHSHDHHGYH). Over residues 176–185 (HHGDGNWHKH) the composition is skewed to basic and acidic residues.

It belongs to the UreE family.

The protein localises to the cytoplasm. Involved in urease metallocenter assembly. Binds nickel. Probably functions as a nickel donor during metallocenter assembly. In Haemophilus influenzae (strain PittGG), this protein is Urease accessory protein UreE.